The sequence spans 511 residues: Phenylalanine--tRNA ligase alpha subunit (511 aa).

L-phenylalanine contacts are provided by residues Thr352, 390 to 392 (QVE), Tyr429, and Phe455.

Belongs to the class-II aminoacyl-tRNA synthetase family. Phe-tRNA synthetase alpha subunit type 2 subfamily. As to quaternary structure, tetramer of two alpha and two beta subunits. Requires Mg(2+) as cofactor.

The protein localises to the cytoplasm. It carries out the reaction tRNA(Phe) + L-phenylalanine + ATP = L-phenylalanyl-tRNA(Phe) + AMP + diphosphate + H(+). The polypeptide is Phenylalanine--tRNA ligase alpha subunit (Methanothermobacter thermautotrophicus (strain ATCC 29096 / DSM 1053 / JCM 10044 / NBRC 100330 / Delta H) (Methanobacterium thermoautotrophicum)).